Here is a 92-residue protein sequence, read N- to C-terminus: C-C motif chemokine 4 (92 aa).

The first 23 residues, 1–23, serve as a signal peptide directing secretion; sequence MKLCVTVLSLLMLVAAFCSPALS. 2 disulfide bridges follow: Cys-34–Cys-58 and Cys-35–Cys-74.

The protein belongs to the intercrine beta (chemokine CC) family. Homodimer and heterodimer of MIP-1-alpha(4-69) and MIP-1-beta(3-69). In terms of processing, N-terminal processed form MIP-1-beta(3-69) is produced by proteolytic cleavage after secretion from peripheral blood lymphocytes.

It is found in the secreted. In terms of biological role, monokine with inflammatory and chemokinetic properties. Binds to CCR5. One of the major HIV-suppressive factors produced by CD8+ T-cells. Recombinant MIP-1-beta induces a dose-dependent inhibition of different strains of HIV-1, HIV-2, and simian immunodeficiency virus (SIV). The processed form MIP-1-beta(3-69) retains the abilities to induce down-modulation of surface expression of the chemokine receptor CCR5 and to inhibit the CCR5-mediated entry of HIV-1 in T-cells. MIP-1-beta(3-69) is also a ligand for CCR1 and CCR2 isoform B. The polypeptide is C-C motif chemokine 4 (CCL4) (Homo sapiens (Human)).